A 207-amino-acid polypeptide reads, in one-letter code: Hemin/hemoglobin-binding protein 1 (207 aa).

Residues 1-27 form the signal peptide; it reads MKKVLVFAAFIVLFSFSFLSTGLTAQA. The 120-residue stretch at 29–148 folds into the NEAT domain; sequence LKDGTYSVDY…RFDEGSAKAL (120 aa). The segment at 151 to 178 is disordered; sequence AVKSSDNNTTTPATKSDSSNKVTNPKSS. Polar residues predominate over residues 154-178; sequence SSDNNTTTPATKSDSSNKVTNPKSS. The NPKXZ sorting signal signature appears at 174-178; that stretch reads NPKSS. Ser-177 is modified (murein peptidoglycan amidated serine). The propeptide at 178-207 is removed by sortase B; sequence SDSSQMFLYGIIFVATGAGLILLKRRAIFK.

It is found in the secreted. The protein resides in the cell wall. Functionally, binds both host hemin and hemoglobin with affinity in the nanomolar range and presumably directs it to membrane transporters. This Listeria monocytogenes serovar 1/2a (strain ATCC BAA-679 / EGD-e) protein is Hemin/hemoglobin-binding protein 1.